Here is a 198-residue protein sequence, read N- to C-terminus: Holliday junction branch migration complex subunit RuvA (198 aa).

Residues 1–63 are domain I; the sequence is MYDYIKGQLT…EDAHLLFGFH (63 aa). The domain II stretch occupies residues 64 to 142; that stretch reads TEDEKDVFLK…EAPQETGNTK (79 aa). A flexible linker region spans residues 143–147; the sequence is ARSNK. The domain III stretch occupies residues 148-198; that stretch reads AGNTQLDEAIEALLALGYKATELKKIRAFFEGTSETAEQYIKSALKLLMKG.

This sequence belongs to the RuvA family. As to quaternary structure, homotetramer. Forms an RuvA(8)-RuvB(12)-Holliday junction (HJ) complex. HJ DNA is sandwiched between 2 RuvA tetramers; dsDNA enters through RuvA and exits via RuvB. An RuvB hexamer assembles on each DNA strand where it exits the tetramer. Each RuvB hexamer is contacted by two RuvA subunits (via domain III) on 2 adjacent RuvB subunits; this complex drives branch migration. In the full resolvosome a probable DNA-RuvA(4)-RuvB(12)-RuvC(2) complex forms which resolves the HJ.

The protein resides in the cytoplasm. In terms of biological role, the RuvA-RuvB-RuvC complex processes Holliday junction (HJ) DNA during genetic recombination and DNA repair, while the RuvA-RuvB complex plays an important role in the rescue of blocked DNA replication forks via replication fork reversal (RFR). RuvA specifically binds to HJ cruciform DNA, conferring on it an open structure. The RuvB hexamer acts as an ATP-dependent pump, pulling dsDNA into and through the RuvAB complex. HJ branch migration allows RuvC to scan DNA until it finds its consensus sequence, where it cleaves and resolves the cruciform DNA. The chain is Holliday junction branch migration complex subunit RuvA from Streptococcus pyogenes serotype M12 (strain MGAS2096).